Reading from the N-terminus, the 502-residue chain is Cyclin-dependent kinase 19 (502 aa).

The residue at position 1 (Met-1) is an N-acetylmethionine. A Protein kinase domain is found at 21–335 (EYEGCKVGRG…SEQALQDPYF (315 aa)). ATP-binding positions include 27–35 (VGRGTYGHV) and Lys-52. The Proton acceptor role is filled by Asp-151. The segment at 359–502 (LNEDDPEEKG…YHPSHQAHRY (144 aa)) is disordered. A compositionally biased stretch (low complexity) spans 371–392 (NQQQQQNQHQQPTAPPQQAAAP). Residues 408–421 (TAGGAGAGVGGTGA) are compositionally biased toward gly residues. Over residues 424 to 435 (QHSQDSSLNQVP) the composition is skewed to polar residues. A Phosphoserine modification is found at Ser-449. The segment covering 458-467 (YQHSSSRLNY) has biased composition (polar residues). Residues 468–496 (QSSVQGSSQSQSTLGYSSSSQQSSQYHPS) are compositionally biased toward low complexity.

The protein belongs to the protein kinase superfamily. CMGC Ser/Thr protein kinase family. CDC2/CDKX subfamily.

It localises to the cytoplasm. The protein localises to the perinuclear region. The protein resides in the nucleus. The catalysed reaction is L-seryl-[protein] + ATP = O-phospho-L-seryl-[protein] + ADP + H(+). It carries out the reaction L-threonyl-[protein] + ATP = O-phospho-L-threonyl-[protein] + ADP + H(+). This Homo sapiens (Human) protein is Cyclin-dependent kinase 19 (CDK19).